We begin with the raw amino-acid sequence, 247 residues long: 5'-nucleotidase SurE (247 aa).

Residues Asp8, Asp9, Ser39, and Asn91 each contribute to the a divalent metal cation site.

It belongs to the SurE nucleotidase family. It depends on a divalent metal cation as a cofactor.

It localises to the cytoplasm. It catalyses the reaction a ribonucleoside 5'-phosphate + H2O = a ribonucleoside + phosphate. Nucleotidase that shows phosphatase activity on nucleoside 5'-monophosphates. The chain is 5'-nucleotidase SurE from Chromobacterium violaceum (strain ATCC 12472 / DSM 30191 / JCM 1249 / CCUG 213 / NBRC 12614 / NCIMB 9131 / NCTC 9757 / MK).